The primary structure comprises 147 residues: Nucleoside diphosphate kinase (147 aa).

Residues K9, F57, R85, T91, R102, and N112 each contribute to the ATP site. H115 acts as the Pros-phosphohistidine intermediate in catalysis.

Belongs to the NDK family. Mg(2+) serves as cofactor.

Its subcellular location is the cytoplasm. It carries out the reaction a 2'-deoxyribonucleoside 5'-diphosphate + ATP = a 2'-deoxyribonucleoside 5'-triphosphate + ADP. The catalysed reaction is a ribonucleoside 5'-diphosphate + ATP = a ribonucleoside 5'-triphosphate + ADP. Functionally, major role in the synthesis of nucleoside triphosphates other than ATP. The ATP gamma phosphate is transferred to the NDP beta phosphate via a ping-pong mechanism, using a phosphorylated active-site intermediate. The polypeptide is Nucleoside diphosphate kinase (Ignicoccus hospitalis (strain KIN4/I / DSM 18386 / JCM 14125)).